The primary structure comprises 472 residues: MSAAKLNVKTSAKPNSRIAVEVEVPANRCKNSYDEALSKLSRSISIPGFRKGKVPKTVVIQQLGVKRIQASALESLLQKVWTETLDQEGIEPLCEPELEDGFETILENFNPEKTLILKLETDITPIPTLKKSSGLTAEVENLIFDPKKVDELIEQSRAQLATKVPVSDRAAQKGDIALVSFKGSFSDDGSEIEGGSADSIEIELEQGRMIPGFIEGVIGMNINDEKTLKCEFPKDYHQEEAKGRKAEFNVSLEDLKIKELPELNDEFAKQASDKENMSDLRADLEKRLKEDNDRKQAKTRQDSLLDVLVKELEVDLPKSLIDQEVRTIVEQTAQNFAQQGIDVKSMFTPELVKSLMESSKGEAEKKLRQKFALQALAKSEKIEVSDKEINSKLEQVEADIKLSNEKNIDAERLKEAITDDLLQEKLFAWLEENNTVVEKTPEKARDQIKEKSSKKKTTKTNKEKKSSKTPKS.

Residues 174–261 (GDIALVSFKG…LEDLKIKELP (88 aa)) form the PPIase FKBP-type domain. The segment at 438–472 (EKTPEKARDQIKEKSSKKKTTKTNKEKKSSKTPKS) is disordered. Basic and acidic residues predominate over residues 439–451 (KTPEKARDQIKEK).

Belongs to the FKBP-type PPIase family. Tig subfamily.

The protein localises to the cytoplasm. The catalysed reaction is [protein]-peptidylproline (omega=180) = [protein]-peptidylproline (omega=0). Involved in protein export. Acts as a chaperone by maintaining the newly synthesized protein in an open conformation. Functions as a peptidyl-prolyl cis-trans isomerase. This is Trigger factor from Prochlorococcus marinus (strain NATL2A).